A 544-amino-acid chain; its full sequence is Cytochrome P450 monooxygenase verL (544 aa).

A helical transmembrane segment spans residues 3–23; sequence VALFPILPIGCLLIYIIFKLW. Position 446 (cysteine 446) interacts with heme. Positions 520 to 544 are disordered; sequence QEKGIDGWKGKKESSSEENRGVSSR.

Belongs to the cytochrome P450 family. Requires heme as cofactor.

It is found in the membrane. The protein operates within mycotoxin biosynthesis. Cytochrome P450 monooxygenase; part of the gene cluster that mediates the biosynthesis of 11'-deoxyverticillin A, one of the dimeric epipolythiodioxopiperazines (ETPs) from the verticillin family that act as mycotoxins. 11'-deoxyverticillin A is required for normal conidiation. The nonribosomal peptide synthetase verP is speculated to be responsible for condensation of amino acids to form the carbon skeleton of verticillin, whereas the cluster-specific tailoring enzymes are involved in further modifications leading to the production of 11'-deoxyverticillin A. This Clonostachys rogersoniana protein is Cytochrome P450 monooxygenase verL.